The sequence spans 960 residues: Chromo domain-containing protein 1 (960 aa).

A Chromo domain is found at 22–74 (YEVEDILADRVNKNGINEYYIKWAGYDWYDNTWEPEQNLFGAEKVLKKWKKRK).

As to quaternary structure, ago1, chp1 and tas3 interact to form the core of the RNA-induced transcriptional silencing (RITS) complex. The RITS complex interacts with the RDRC complex via interaction between ago1 and hrr1. Clr4 has a role in mediating this interaction. Interacts with dri1.

The protein localises to the nucleus. The protein resides in the cytoplasm. It localises to the cytoskeleton. It is found in the microtubule organizing center. Its subcellular location is the spindle pole body. In terms of biological role, component of the kinetochore which plays a role in stabilizing microtubules and so allowing accurate chromosome segregation. Has a role in the RNA interference (RNAi) pathway which is important for heterochromatin formation and accurate chromosome segregation. A member of the RNA-induced transcriptional silencing (RITS) complex which is involved in the biosynthesis of dsRNA from primer siRNAs provided by the RNA-directed RNA polymerase (RDRC) complex. This is Chromo domain-containing protein 1 from Schizosaccharomyces pombe (strain 972 / ATCC 24843) (Fission yeast).